A 300-amino-acid chain; its full sequence is MTLSRDAAIQVAQVLSEALPYIRRFVGKTLVIKYGGNAMESDELKTGFARDIVLMKAVGIHPVVVHGGGPQIGDLLKRLSIESRFVDGMRVTDAQTMDVVEMVLGGQVNKDIVNLINRHGGSAIGLTGKDAGLIRAKKLKVTRQTPEMTQPEIIDIGQVGEVESVNTELLNMLVQGDFIPVIAPIGVGADGESYNINADLVAGKVAEALKAEKLMLLTNIAGLMDKEGRVLTGLSTEQVDALIADGTIYGGMLPKIRCALDAVQGGVTSAHIIDGRVPNAVLLEIFTDTGVGTLITNRQG.

Residues 68 to 69 (GG), Arg90, and Asn195 each bind substrate.

This sequence belongs to the acetylglutamate kinase family. ArgB subfamily.

Its subcellular location is the cytoplasm. The enzyme catalyses N-acetyl-L-glutamate + ATP = N-acetyl-L-glutamyl 5-phosphate + ADP. It functions in the pathway amino-acid biosynthesis; L-arginine biosynthesis; N(2)-acetyl-L-ornithine from L-glutamate: step 2/4. Its function is as follows. Catalyzes the ATP-dependent phosphorylation of N-acetyl-L-glutamate. This Azotobacter vinelandii (strain DJ / ATCC BAA-1303) protein is Acetylglutamate kinase.